Here is a 124-residue protein sequence, read N- to C-terminus: Bactoprenol-linked glucose translocase (124 aa).

4 consecutive transmembrane segments (helical) span residues 12–32 (FFSYFLIGIVNTALHWGVFYA), 45–65 (NIVGFICAATFSFFANARCSF), 75–95 (FIFIFFMGAMSYLFGVLFDLL), and 96–116 (ALSPIFTLFTFSLFSLVLGYC).

Belongs to the GtrA family.

It localises to the cell membrane. The protein operates within bacterial outer membrane biogenesis; lipopolysaccharide biosynthesis. Involved in O antigen modification. Involved in the translocation of bactoprenol-linked glucose across the cytoplasmic membrane. This is Bactoprenol-linked glucose translocase (rfbI) from Shigella flexneri.